Here is a 143-residue protein sequence, read N- to C-terminus: Lysozyme C (143 aa).

Residues 1-15 form the signal peptide; it reads MRCLLLLLLVPVPGA. Residues 16 to 143 form the C-type lysozyme domain; the sequence is KVFERCEWAR…LSSYVAGCGV (128 aa). Intrachain disulfides connect C21-C141, C45-C129, C79-C94, and C90-C108. Residues E50 and D67 contribute to the active site.

Belongs to the glycosyl hydrolase 22 family. In terms of assembly, monomer.

The protein localises to the secreted. It carries out the reaction Hydrolysis of (1-&gt;4)-beta-linkages between N-acetylmuramic acid and N-acetyl-D-glucosamine residues in a peptidoglycan and between N-acetyl-D-glucosamine residues in chitodextrins.. Functionally, lysozymes have primarily a bacteriolytic function; those in tissues and body fluids are associated with the monocyte-macrophage system and enhance the activity of immunoagents. The protein is Lysozyme C (lys) of Scophthalmus maximus (Turbot).